The chain runs to 436 residues: GTPase Der (436 aa).

EngA-type G domains are found at residues P4–A167 and I175–E351. GTP is bound by residues G10–S17, D57–I61, N119–D122, G181–S188, D229–I233, and N294–D297. The region spanning Q352–K436 is the KH-like domain.

It belongs to the TRAFAC class TrmE-Era-EngA-EngB-Septin-like GTPase superfamily. EngA (Der) GTPase family. Associates with the 50S ribosomal subunit.

In terms of biological role, GTPase that plays an essential role in the late steps of ribosome biogenesis. In Ligilactobacillus salivarius (strain UCC118) (Lactobacillus salivarius), this protein is GTPase Der.